A 179-amino-acid polypeptide reads, in one-letter code: Pectinesterase inhibitor 5 (179 aa).

Residues 1 to 25 (MATMLINHMLFLTSLLIVVFPVANA) form the signal peptide. 2 cysteine pairs are disulfide-bonded: cysteine 35–cysteine 44 and cysteine 101–cysteine 141.

The protein belongs to the PMEI family. As to expression, expressed in seeds, buds, and mature flowers.

The protein resides in the secreted. It localises to the extracellular space. The protein localises to the apoplast. In terms of biological role, pectin methylesterase (PME) inhibitor that targets PME from seeds and modulates PME activity and pectin methylesterification during seed germination. The protein is Pectinesterase inhibitor 5 of Arabidopsis thaliana (Mouse-ear cress).